A 689-amino-acid chain; its full sequence is 1,4-alpha-glucan-branching enzyme (689 aa).

Positions 93 and 128 each coordinate (1,4-alpha-D-glucosyl)n. Asp345 serves as the catalytic Nucleophile. The active-site Proton donor is Glu400.

Belongs to the glycosyl hydrolase 13 family. GlgB subfamily.

It localises to the cytoplasm. The enzyme catalyses Transfers a segment of a (1-&gt;4)-alpha-D-glucan chain to a primary hydroxy group in a similar glucan chain.. The protein operates within glycan biosynthesis; glycogen biosynthesis. Glycogen-branching enzyme participates in the glycogen biosynthetic process along with glycogenin and glycogen synthase. Generates alpha-1,6-glucosidic branches from alpha-1,4-linked glucose chains, to increase solubility of the glycogen polymer. The polypeptide is 1,4-alpha-glucan-branching enzyme (gbeA) (Aspergillus oryzae (strain ATCC 42149 / RIB 40) (Yellow koji mold)).